A 1127-amino-acid chain; its full sequence is DNA-directed RNA polymerase I subunit RPA2 homolog (1127 aa).

Phosphoserine is present on S1025.

This sequence belongs to the RNA polymerase beta chain family. In terms of assembly, component of the RNA polymerase I (Pol I) complex consisting of at least 13 subunits.

It is found in the nucleus. Its subcellular location is the nucleolus. The catalysed reaction is RNA(n) + a ribonucleoside 5'-triphosphate = RNA(n+1) + diphosphate. Antisense ribosomal siRNAs silence rRNA expression during the elongation phase by decreasing rpoa-2 occupancy downstream of the RNAi-targeted region in nrde-2-dependent manner. Functionally, DNA-dependent RNA polymerase catalyzes the transcription of DNA into RNA using the four ribonucleoside triphosphates as substrates. Second largest core component of RNA polymerase I which synthesizes ribosomal RNA precursors. Proposed to contribute to the polymerase catalytic activity and forms the polymerase active center together with the largest subunit. Pol I is composed of mobile elements and RPA2 is part of the core element with the central large cleft and probably a clamp element that moves to open and close the cleft. Specifically binds to 18S, 5.8S and 26S rDNA, but not to 5S rDNA. This Caenorhabditis elegans protein is DNA-directed RNA polymerase I subunit RPA2 homolog.